The chain runs to 341 residues: MSSTAMVSGDDSLEPTLQSLLDQKTLRWVFVGGKGGVGKTTTSCSLAIQLAKVRKSVLLISTDPAHNLSDAFGQKFGKEARLVDGFDNLSAMEIDPNGSIQDLLATGGDQADDPMAGLGLGGMMQDLAFSIPGVDEAMSFAEVLKQVKSLSYEVIVFDTAPTGHTLRFLQFPTVLEKALAKLSQLSSQFGPMLNSILGARGGLPGGQNLDEILSKMESLRETIGEVNAQFKDADLTTFVCVCIAEFLSLYETERMIQELTSYQIDTHCIVVNQLLFPGKDSSCEQCKARRKMQKKYLNEIEDLYEDFNVVRMPMLVEEVRGKEKLEKFSNMLVNPYVPPEE.

34–41 (KGGVGKTT) contributes to the ATP binding site. Residue D63 is part of the active site. E245 and N272 together coordinate ATP. Zn(2+) is bound by residues C283 and C286.

This sequence belongs to the arsA ATPase family. In terms of assembly, homodimer.

The protein localises to the cytoplasm. It localises to the endoplasmic reticulum. ATPase required for the post-translational delivery of tail-anchored (TA) proteins to the endoplasmic reticulum. Recognizes and selectively binds the transmembrane domain of TA proteins in the cytosol. This complex then targets to the endoplasmic reticulum by membrane-bound receptors, where the tail-anchored protein is released for insertion. This process is regulated by ATP binding and hydrolysis. ATP binding drives the homodimer towards the closed dimer state, facilitating recognition of newly synthesized TA membrane proteins. ATP hydrolysis is required for insertion. Subsequently, the homodimer reverts towards the open dimer state, lowering its affinity for the membrane-bound receptor, and returning it to the cytosol to initiate a new round of targeting. The sequence is that of ATPase GET3 from Ajellomyces capsulatus (strain H143) (Darling's disease fungus).